Here is a 100-residue protein sequence, read N- to C-terminus: Coiled-coil domain-containing protein 167 (100 aa).

A coiled-coil region spans residues Val14–Met81. Residues Met82–Ile99 traverse the membrane as a helical segment.

It localises to the membrane. The sequence is that of Coiled-coil domain-containing protein 167 (ccdc167) from Danio rerio (Zebrafish).